The chain runs to 86 residues: Exodeoxyribonuclease 7 small subunit (86 aa).

The interval 1–26 (MQDELFETEKAPQKNTKNAKNAPKKS) is disordered.

The protein belongs to the XseB family. In terms of assembly, heterooligomer composed of large and small subunits.

The protein resides in the cytoplasm. The enzyme catalyses Exonucleolytic cleavage in either 5'- to 3'- or 3'- to 5'-direction to yield nucleoside 5'-phosphates.. Bidirectionally degrades single-stranded DNA into large acid-insoluble oligonucleotides, which are then degraded further into small acid-soluble oligonucleotides. The polypeptide is Exodeoxyribonuclease 7 small subunit (Helicobacter pylori (strain Shi470)).